Consider the following 194-residue polypeptide: MAILSDKTIKEYLEEGKIVIDPLKDEQQIQPSSVDMRLGDEFKVFKVIRKPYIDPKDEEDIAEYMESSTVPEGEAFIIHPNEFALATTQEYVKVPDDLVARVEGRSSMGRLGVTMHVTAGYVDPGFEGRITLEISNIGAMPVALYPGQRVCQLVFETMTTPAELPYGHPKRNSKYMKQLKPESSRVKLDYELKK.

DCTP is bound by residues 105–110 (RSSMGR), Asp-123, 131–133 (TLE), Gln-152, Tyr-166, Lys-174, and Gln-178. Glu-133 serves as the catalytic Proton donor/acceptor.

Belongs to the dCTP deaminase family. In terms of assembly, homotrimer.

It catalyses the reaction dCTP + 2 H2O = dUMP + NH4(+) + diphosphate. It functions in the pathway pyrimidine metabolism; dUMP biosynthesis; dUMP from dCTP: step 1/1. In terms of biological role, bifunctional enzyme that catalyzes both the deamination of dCTP to dUTP and the hydrolysis of dUTP to dUMP without releasing the toxic dUTP intermediate. The chain is dCTP deaminase, dUMP-forming from Methanobrevibacter smithii (strain ATCC 35061 / DSM 861 / OCM 144 / PS).